Consider the following 471-residue polypeptide: Tryptophanase (471 aa).

At lysine 270 the chain carries N6-(pyridoxal phosphate)lysine.

This sequence belongs to the beta-eliminating lyase family. As to quaternary structure, homotetramer. It depends on pyridoxal 5'-phosphate as a cofactor.

The catalysed reaction is L-tryptophan + H2O = indole + pyruvate + NH4(+). It functions in the pathway amino-acid degradation; L-tryptophan degradation via pyruvate pathway; indole and pyruvate from L-tryptophan: step 1/1. The protein is Tryptophanase of Histophilus somni (strain 129Pt) (Haemophilus somnus).